We begin with the raw amino-acid sequence, 216 residues long: MINTKCIHPVQNKWKGDLPCSGPGVLPTVIEQSGRGERAFDIYSRLLRERIIFLGTDVNDQIADALVAQMLFLEAEDPEKDIQLYINSPGGSVTAGLAIYDTMQQVNPDIVTMCYGLAASMGAFLLAGGSKGKRLALPNSRIMIHQPLGGAQGQAVEIEIQAKEILFLKETLNNLLAEHTGQSLEKISEDTDRDHFLSPQEAVEYGLIDKVVNSLN.

Serine 120 (nucleophile) is an active-site residue. Residue histidine 145 is part of the active site.

The protein belongs to the peptidase S14 family. As to quaternary structure, fourteen ClpP subunits assemble into 2 heptameric rings which stack back to back to give a disk-like structure with a central cavity, resembling the structure of eukaryotic proteasomes.

The protein resides in the cytoplasm. It carries out the reaction Hydrolysis of proteins to small peptides in the presence of ATP and magnesium. alpha-casein is the usual test substrate. In the absence of ATP, only oligopeptides shorter than five residues are hydrolyzed (such as succinyl-Leu-Tyr-|-NHMec, and Leu-Tyr-Leu-|-Tyr-Trp, in which cleavage of the -Tyr-|-Leu- and -Tyr-|-Trp bonds also occurs).. In terms of biological role, cleaves peptides in various proteins in a process that requires ATP hydrolysis. Has a chymotrypsin-like activity. Plays a major role in the degradation of misfolded proteins. In Prochlorococcus marinus (strain SARG / CCMP1375 / SS120), this protein is ATP-dependent Clp protease proteolytic subunit 3.